We begin with the raw amino-acid sequence, 603 residues long: Cdc42-interacting protein 4 (603 aa).

The interval 1–117 is required for podosome formation and interaction with AKAP9 and microtubules; that stretch reads MDWGTELWDQ…EMKQERKMHF (117 aa). A required for translocation to the plasma membrane in response to insulin region spans residues 1–117; it reads MDWGTELWDQ…EMKQERKMHF (117 aa). Positions 1-264 constitute an F-BAR domain; the sequence is MDWGTELWDQ…AAESVDAKND (264 aa). The stretch at 67–259 forms a coiled coil; it reads FSQQQSFVQL…EGMKVAAESV (193 aa). Residues 293 to 539 form an interaction with CDC42 region; that stretch reads RVPSDSSLGT…YTEFDEDFEE (247 aa). An interaction with PDE6G region spans residues 293–603; it reads RVPSDSSLGT…PTSYLRVTLN (311 aa). The disordered stretch occupies residues 295-358; the sequence is PSDSSLGTPD…PSSPRSGRDP (64 aa). A phosphoserine mark is found at Ser296, Ser298, and Ser299. The span at 316-329 shows a compositional bias: basic residues; that stretch reads SRAKRWPFGKKNKP. The segment covering 333–346 has biased composition (low complexity); sequence SLSLLGGHLPSTLS. Ser335 and Ser351 each carry phosphoserine. Residues 388–481 are a coiled coil; that stretch reads TEDFSHLPPE…ESRVLSNRGD (94 aa). The REM-1 domain occupies 393-470; that stretch reads HLPPEQQRKR…VQKYEAWLAE (78 aa). The required for interaction with FASLG and localization to lysosomes stretch occupies residues 471 to 603; that stretch reads AESRVLSNRG…PTSYLRVTLN (133 aa). The segment at 477 to 541 is disordered; sequence SNRGDSLSRH…EFDEDFEEPA (65 aa). Ser482 carries the post-translational modification Phosphoserine. Positions 487–543 are interaction with DNM2 and WASL; that stretch reads ARPPDPPTTAPPDSSSSSTNSGSQDNKESSSEEPPSEGQDTPIYTEFDEDFEEPASP. Over residues 497–510 the composition is skewed to low complexity; the sequence is PPDSSSSSTNSGSQ. An interaction with DNM1 and WASL region spans residues 532–603; that stretch reads EFDEDFEEPA…PTSYLRVTLN (72 aa). The interval 540 to 603 is required for podosome formation; that stretch reads PASPIGQCVA…PTSYLRVTLN (64 aa). The SH3 domain maps to 542–603; that stretch reads SPIGQCVAIY…PTSYLRVTLN (62 aa). Positions 546–603 are interaction with WAS; that stretch reads QCVAIYHFEGSSEGTVSMSEGEDLSLMEEDKGDGWTRVRRKQGAEGYVPTSYLRVTLN. The interval 548 to 603 is interaction with ARHGAP17, DAAM1, DIAPH1 and DIAPH2; sequence VAIYHFEGSSEGTVSMSEGEDLSLMEEDKGDGWTRVRRKQGAEGYVPTSYLRVTLN.

This sequence belongs to the FNBP1 family. Homodimerizes, the dimers can polymerize end-to-end to form filamentous structures. Interacts with AKAP9, ARHGAP17, DAAM1, DIAPH1, DIAPH2, DNM1, FASLG/FASL, GAPVD1, LYN, microtubules, PDE6G, SRC and WAS/WASP. Interacts with the ligand binding domain of the thyroid receptor (TR) in the presence of thyroid hormone. May interact with CTNNB1 and HD/HTT. Interacts specifically with GTP-bound CDC42 and RHOQ. Interacts with DNM2 and WASL. Tyrosine phosphorylated. Also phosphorylated by PKA.

The protein resides in the cytoplasm. It is found in the cytoskeleton. It localises to the cell cortex. The protein localises to the lysosome. Its subcellular location is the golgi apparatus. The protein resides in the cell membrane. It is found in the cell projection. It localises to the phagocytic cup. In terms of biological role, required to coordinate membrane tubulation with reorganization of the actin cytoskeleton during endocytosis. Binds to lipids such as phosphatidylinositol 4,5-bisphosphate and phosphatidylserine and promotes membrane invagination and the formation of tubules. Also promotes CDC42-induced actin polymerization by recruiting WASL/N-WASP which in turn activates the Arp2/3 complex. Actin polymerization may promote the fission of membrane tubules to form endocytic vesicles. Required for the formation of podosomes, actin-rich adhesion structures specific to monocyte-derived cells. May be required for the lysosomal retention of FASLG/FASL. Required for translocation of GLUT4 to the plasma membrane in response to insulin signaling. The sequence is that of Cdc42-interacting protein 4 (Trip10) from Mus musculus (Mouse).